The sequence spans 151 residues: Putative pre-16S rRNA nuclease (151 aa).

It belongs to the YqgF nuclease family.

The protein resides in the cytoplasm. Its function is as follows. Could be a nuclease involved in processing of the 5'-end of pre-16S rRNA. This chain is Putative pre-16S rRNA nuclease, found in Neisseria gonorrhoeae (strain ATCC 700825 / FA 1090).